We begin with the raw amino-acid sequence, 424 residues long: Geranylgeranyl pyrophosphate synthase D (424 aa).

The tract at residues 42–73 (PSATWPSVPKVHKRNRSTSLSDQQTAKKAHAN) is disordered. Residues 58 to 67 (STSLSDQQTA) are compositionally biased toward polar residues. 3 residues coordinate isopentenyl diphosphate: Lys-147, Arg-150, and His-179. Residues Asp-186 and Asp-190 each contribute to the Mg(2+) site. Position 195 (Arg-195) interacts with dimethylallyl diphosphate. Arg-196 provides a ligand contact to isopentenyl diphosphate. Dimethylallyl diphosphate-binding residues include Lys-274, Thr-275, Gln-311, Lys-328, and Lys-338.

This sequence belongs to the FPP/GGPP synthase family. The cofactor is Mg(2+).

The protein resides in the cytoplasm. It carries out the reaction isopentenyl diphosphate + dimethylallyl diphosphate = (2E)-geranyl diphosphate + diphosphate. The catalysed reaction is isopentenyl diphosphate + (2E)-geranyl diphosphate = (2E,6E)-farnesyl diphosphate + diphosphate. It catalyses the reaction isopentenyl diphosphate + (2E,6E)-farnesyl diphosphate = (2E,6E,10E)-geranylgeranyl diphosphate + diphosphate. The protein operates within isoprenoid biosynthesis; farnesyl diphosphate biosynthesis; farnesyl diphosphate from geranyl diphosphate and isopentenyl diphosphate: step 1/1. It participates in isoprenoid biosynthesis; geranyl diphosphate biosynthesis; geranyl diphosphate from dimethylallyl diphosphate and isopentenyl diphosphate: step 1/1. Its pathway is isoprenoid biosynthesis; geranylgeranyl diphosphate biosynthesis; geranylgeranyl diphosphate from farnesyl diphosphate and isopentenyl diphosphate: step 1/1. In terms of biological role, catalyzes the trans-addition of the 3 molecules of isopentenyl diphosphate (IPP) onto dimethylallyl diphosphate (DMAPP) to form geranylgeranyl pyrophosphate (GGDP). The chain is Geranylgeranyl pyrophosphate synthase D (GGS-D) from Phomopsis amygdali (Fusicoccum amygdali).